Here is a 484-residue protein sequence, read N- to C-terminus: ETS translocation variant 4 (484 aa).

Lysine 6 participates in a covalent cross-link: Glycyl lysine isopeptide (Lys-Gly) (interchain with G-Cter in SUMO2). The interval 90–115 is disordered; the sequence is SPTTRIKKEPQSPRTDPALSCSRKPP. Lysine 96 participates in a covalent cross-link: Glycyl lysine isopeptide (Lys-Gly) (interchain with G-Cter in SUMO). A Phosphoserine modification is found at serine 101. Lysine 139 is covalently cross-linked (Glycyl lysine isopeptide (Lys-Gly) (interchain with G-Cter in SUMO2)). 3 positions are modified to phosphoserine: serine 140, serine 149, and serine 214. Glycyl lysine isopeptide (Lys-Gly) (interchain with G-Cter in SUMO) cross-links involve residues lysine 226 and lysine 260. A Glycyl lysine isopeptide (Lys-Gly) (interchain with G-Cter in SUMO2) cross-link involves residue lysine 322. The segment at residues 341 to 421 is a DNA-binding region (ETS); sequence LQLWQFLVAL…AGERYVYKFV (81 aa).

This sequence belongs to the ETS family. In terms of processing, sumoylated; enhanced upon ERK/MAP kinase pathway activation, it positively regulates the transcriptional activator capacity. Sumoylation at Lys-96 probably requires phosphorylation at Ser-101. Transiently polysumoylated and desumoylated by SENP1. Sumoylation is a prerequisite to polyubiquitination which in turn increases proteasomal-mediated degradation. Probably polyubiquitinated by RNF4 and deubiquitinated by USP2. In terms of tissue distribution, expressed in keratinocytes.

Its subcellular location is the nucleus. In terms of biological role, transcriptional activator. May play a role in keratinocyte differentiation. Its function is as follows. (Microbial infection) Binds to the enhancer of the adenovirus E1A gene and acts as a transcriptional activator; the core-binding sequence is 5'-[AC]GGA[AT]GT-3'. This Homo sapiens (Human) protein is ETS translocation variant 4 (ETV4).